An 81-amino-acid chain; its full sequence is Trefoil factor 3 (81 aa).

Residues Met1–Ala22 form the signal peptide. The P-type domain occupies Ser31–Leu74. Intrachain disulfides connect Cys33–Cys59, Cys43–Cys58, and Cys53–Cys70.

In terms of assembly, monomer. Homodimer; disulfide-linked. In terms of tissue distribution, expressed in goblet cells of the intestines and colon (at protein level). Expressed abundantly in goblet cells of intestine and colon, and at low levels in stomach. No expression in brain, lung, spleen, kidney, uterus, pancreas, liver, heart or thymus.

Its subcellular location is the secreted. It is found in the extracellular space. The protein resides in the extracellular matrix. It localises to the cytoplasm. Functionally, involved in the maintenance and repair of the intestinal mucosa. Promotes the mobility of epithelial cells in healing processes (motogen). This chain is Trefoil factor 3 (Tff3), found in Mus musculus (Mouse).